We begin with the raw amino-acid sequence, 518 residues long: Ent-cassadiene hydroxylase (518 aa).

Residues 6-26 (LILALGLSVLFVLLSKLVSSA) traverse the membrane as a helical segment. Residue cysteine 451 participates in heme binding.

It belongs to the cytochrome P450 family. Requires heme as cofactor.

It is found in the membrane. It carries out the reaction ent-cassa-12,15-diene + 3 reduced [NADPH--hemoprotein reductase] + 3 O2 = ent-3beta-hydroxycassa-12,15-dien-2-one + 3 oxidized [NADPH--hemoprotein reductase] + 4 H2O + 3 H(+). Functionally, enzyme of the diterpenoid metabolism involved in the biosynthesis of antibacterial oryzalides such as phytocassane. Catalyzes the hydroxylation of ent-cassa-12,15-diene to form ent-3beta-hydroxycassa-12,15-dien-2-one. This Oryza sativa subsp. japonica (Rice) protein is Ent-cassadiene hydroxylase (CYP71Z7).